We begin with the raw amino-acid sequence, 904 residues long: MVDYHSAGQPYPYGGNGPGPNGDYMAQEDDWDRDLLLDPAWEKQQRKTFTAWCNSHLRKAGTQIENIDEDFRDGLKLMLLLEVISGERLPKPERGKMRVHKINNVNKALDFIASKGVNVVSIGAEEIVDGNAKMTLGMIWTIILRFAIQDISVEETSAKEGLLLWCQRKTAPYKNVNVQNFHISWKDGLAFNALIHRHRPELIEYDKLRKDDPVTNLNNAFEVAEKYLDIPKMLDAEDIVNTARPDEKAIMTYVSSFYHAFSGAQKAETAANRICKVLAVNQENEHLMEDYEKLASDLLEWIRRTIPWLEDRSPQKTIQEMQQKLEDFRDYRRVHKPPKVQEKCQLEINFNTLQTKLRLSNRPAFMPSEGRMVSDINTGWQHLEQAEKGYEEWLLNEIRRLEPLDHLAEKFRQKASIHEAWTEGKEAMLKQKDYETATLSDIKALIRKHEAFESDLAAHQDRVEQIAAIAQELNELDYYDSPSVNARCQKICDQWDVLGSLTHSRREALEKTEKQLETIDELHLEYAKRAAPFNNWMESAMEDLQDMFIVHTIEEIEGLIAAHDQFKATLPDADREREAILGIQREAQRIADLHSIKLSGNNPYTSVTPQVINSKWERVQQLVPTRDRALQDEQSRQQCNERLRRQFAGQANIVGPWMQTKMEEIGRISIEMHGTLEDQLQHLKHYEQSIVDYKPNLELLEHEHQLVEEALIFDNKHTNYTMEHIRVGWEQLLTTIARTINEVENQILTRDAKGISQEQMQEFRASFNHFDKDHCGALGPEEFKACLISLGYDVENDRQGDAEFNRIMSLVDPNGSGSVTFQAFIDFMSRETTDTDTADQVIASFKVLAGDKNYITAEELRRELPPEQAEYCIARMAPYRGPDAAPGALDYKSFSTALYGESDL.

The tract at residues 1–27 is disordered; that stretch reads MVDYHSAGQPYPYGGNGPGPNGDYMAQ. An actin-binding region spans residues 1–259; it reads MVDYHSAGQP…IMTYVSSFYH (259 aa). 2 Calponin-homology (CH) domains span residues 43–147 and 156–262; these read KQQR…LRFA and TSAK…HAFS. Spectrin repeat units lie at residues 286–396, 406–511, 521–632, and 642–745; these read HLME…WLLN, HLAE…ALEK, ELHL…ALQD, and RLRR…EVEN. EF-hand domains lie at 758–793 and 799–834; these read EQMQEFRASFNHFDKDHCGALGPEEFKACLISLGYD and QGDAEFNRIMSLVDPNGSGSVTFQAFIDFMSRETTD. Ca(2+) contacts are provided by D771, D773, E782, D812, N814, S816, and S818.

Belongs to the alpha-actinin family. In terms of assembly, homodimer; antiparallel. Component of the CART complex. May interact with nuclear receptors.

Its subcellular location is the nucleus. It is found in the cytoplasm. It localises to the cell junction. The protein localises to the perinuclear region. Functionally, F-actin cross-linking protein which is thought to anchor actin to a variety of intracellular structures. This is a bundling protein. Probably involved in vesicular trafficking via its association with the CART complex. Involved in tight junction assembly in epithelial cells. May also function as a transcriptional coactivator, stimulating transcription mediated by nuclear hormone receptors. The polypeptide is Alpha-actinin-4 (Gallus gallus (Chicken)).